The primary structure comprises 351 residues: Quinolinate phosphoribosyltransferase [decarboxylating] 2, mitochondrial (351 aa).

Residues R142, 173–175 (TRK), R197, K207, E240, D267, 299–301 (SGN), and 320–322 (SGA) each bind substrate.

It belongs to the NadC/ModD family.

It localises to the mitochondrion. It carries out the reaction nicotinate beta-D-ribonucleotide + CO2 + diphosphate = quinolinate + 5-phospho-alpha-D-ribose 1-diphosphate + 2 H(+). It participates in alkaloid biosynthesis; nicotine biosynthesis. The protein operates within cofactor biosynthesis; NAD(+) biosynthesis; nicotinate D-ribonucleotide from quinolinate: step 1/1. In terms of biological role, involved in the biosynthesis of pyridine alkaloid natural products, leading mainly to the production of anabasine, anatabine, nicotine and nornicotine, effective deterrents against herbivores with antiparasitic and pesticide properties (neurotoxins); nornicotine serves as the precursor in the synthesis of the carcinogen compound N'-nitrosonornicotine (NNN). Involved in the catabolism of quinolinic acid (QA). The sequence is that of Quinolinate phosphoribosyltransferase [decarboxylating] 2, mitochondrial from Nicotiana glauca (Glaucous tobacco).